A 316-amino-acid polypeptide reads, in one-letter code: Pantothenate kinase (316 aa).

95 to 102 (GSVAVGKS) is a binding site for ATP.

The protein belongs to the prokaryotic pantothenate kinase family.

The protein localises to the cytoplasm. It carries out the reaction (R)-pantothenate + ATP = (R)-4'-phosphopantothenate + ADP + H(+). It participates in cofactor biosynthesis; coenzyme A biosynthesis; CoA from (R)-pantothenate: step 1/5. This Shigella boydii serotype 18 (strain CDC 3083-94 / BS512) protein is Pantothenate kinase.